The chain runs to 361 residues: Phospho-N-acetylmuramoyl-pentapeptide-transferase (361 aa).

10 consecutive transmembrane segments (helical) span residues 28-48 (LAVL…IKFL), 74-94 (TMGG…LADL), 99-119 (IWIT…DDYA), 135-155 (LLLQ…TIDS), 167-187 (SLSM…IVGA), 203-223 (VPIA…GNLI), 236-256 (TGEL…FLWF), 263-283 (VFMG…ISVI), 288-308 (IVLG…IMQV), and 338-358 (KVVI…LSSL).

Belongs to the glycosyltransferase 4 family. MraY subfamily. Mg(2+) serves as cofactor.

It is found in the cell inner membrane. The catalysed reaction is UDP-N-acetyl-alpha-D-muramoyl-L-alanyl-gamma-D-glutamyl-meso-2,6-diaminopimeloyl-D-alanyl-D-alanine + di-trans,octa-cis-undecaprenyl phosphate = di-trans,octa-cis-undecaprenyl diphospho-N-acetyl-alpha-D-muramoyl-L-alanyl-D-glutamyl-meso-2,6-diaminopimeloyl-D-alanyl-D-alanine + UMP. It participates in cell wall biogenesis; peptidoglycan biosynthesis. In terms of biological role, catalyzes the initial step of the lipid cycle reactions in the biosynthesis of the cell wall peptidoglycan: transfers peptidoglycan precursor phospho-MurNAc-pentapeptide from UDP-MurNAc-pentapeptide onto the lipid carrier undecaprenyl phosphate, yielding undecaprenyl-pyrophosphoryl-MurNAc-pentapeptide, known as lipid I. The polypeptide is Phospho-N-acetylmuramoyl-pentapeptide-transferase (Rickettsia bellii (strain RML369-C)).